A 204-amino-acid chain; its full sequence is Octanoyltransferase (204 aa).

In terms of domain architecture, BPL/LPL catalytic spans 27 to 204; it reads KNTKDELWIV…LINYVSRNRH (178 aa). Substrate is bound by residues 66-73, 133-135, and 146-148; these read RGGQVTYH, ALG, and GLS. C164 acts as the Acyl-thioester intermediate in catalysis.

It belongs to the LipB family.

It localises to the cytoplasm. The enzyme catalyses octanoyl-[ACP] + L-lysyl-[protein] = N(6)-octanoyl-L-lysyl-[protein] + holo-[ACP] + H(+). It participates in protein modification; protein lipoylation via endogenous pathway; protein N(6)-(lipoyl)lysine from octanoyl-[acyl-carrier-protein]: step 1/2. Its function is as follows. Catalyzes the transfer of endogenously produced octanoic acid from octanoyl-acyl-carrier-protein onto the lipoyl domains of lipoate-dependent enzymes. Lipoyl-ACP can also act as a substrate although octanoyl-ACP is likely to be the physiological substrate. The protein is Octanoyltransferase of Vesicomyosocius okutanii subsp. Calyptogena okutanii (strain HA).